Here is a 402-residue protein sequence, read N- to C-terminus: LIM/homeobox protein Lhx5 (402 aa).

2 consecutive LIM zinc-binding domains span residues 3–61 (VHCA…RRFG) and 62–125 (TKCA…SSSL). Residues 124–148 (SLKEGSLNSVSSCTDRSLSPDLQDP) are compositionally biased toward low complexity. Disordered regions lie at residues 124 to 186 (SLKE…PRTT) and 298 to 402 (HGPP…AAVW). Basic and acidic residues predominate over residues 151 to 167 (DDPKETDNSTSSDKETA). A DNA-binding region (homeobox) is located at residues 180 to 239 (RRGPRTTIKAKQLETLKAAFAATPKPTRHIREQLAQETGLNMRVIQVWFQNRRSKERRMK). 2 stretches are compositionally biased toward low complexity: residues 300–311 (PPSQAQSPADSS) and 322–336 (PLGA…PHGA).

It is found in the nucleus. In terms of biological role, plays an essential role in the regulation of neuronal differentiation and migration during development of the central nervous system. This Mus musculus (Mouse) protein is LIM/homeobox protein Lhx5 (Lhx5).